A 1351-amino-acid polypeptide reads, in one-letter code: Tripartite motif-containing protein 66 (1351 aa).

Residues 105 to 150 (MARNCSECKEKRAAHILCTYCNRWLCSSCTEEHRHSPVPGGPFFPR) form a B box-type 1; atypical zinc finger. Cysteine 109, cysteine 112, cysteine 133, histidine 139, cysteine 169, histidine 172, cysteine 192, and histidine 197 together coordinate Zn(2+). Residues 164–205 (DFTLYCPLHTQEVLKLFCETCDMLTCHSCLVVEHKEHRCRHV) form a B box-type 2 zinc finger. Residues 234–304 (AKQIEDRIFE…IMVLNRQFEH (71 aa)) are a coiled coil. Disordered regions lie at residues 542-608 (FGHH…CSQN), 663-730 (APVQ…VRKH), and 857-895 (CPLQSIPPVSDMQPETGSSSSSGRTSGSLCPRDGADPSL). Pro residues predominate over residues 560 to 588 (QLPPPPPPLPHPPPPLPPPPQQPHPPLPP). Residues 664-676 (PVQSQSQEETLQA) are compositionally biased toward polar residues. Residues 872 to 884 (TGSSSSSGRTSGS) show a composition bias toward low complexity. The PxVxL motif motif lies at 995-999 (PYVRL). The disordered stretch occupies residues 1067-1098 (TSLAGQRPPEVEGTSPEEHRLIPRTPGAKKGP). Residues 1105–1152 (EDFCAVCLNGGELLCCDRCPKVFHLSCHVPALLSFPGGEWVCTLCRSL) form a PHD-type zinc finger. The 107-residue stretch at 1176 to 1282 (GLSMYDQKKC…VFFEGWLKEI (107 aa)) folds into the Bromo domain. Positions 1289–1351 (AQPRQEDSDS…FRLANSISQV (63 aa)) are disordered.

As to quaternary structure, can form homodimers and heterodimers. Interacts with CBX5, CBX1 and CBX3 via PxVxL motif.

The protein resides in the nucleus. May function as transcription repressor; The repressive effects are mediated, at least in part, by recruitment of deacetylase activity. May play a role as negative regulator of postmeiotic genes acting through CBX3 complex formation and centromere association. The polypeptide is Tripartite motif-containing protein 66 (TRIM66) (Homo sapiens (Human)).